Consider the following 211-residue polypeptide: Protein-methionine-sulfoxide reductase heme-binding subunit MsrQ (211 aa).

Transmembrane regions (helical) follow at residues 10-30 (WLKV…VWAI), 54-74 (FLLA…PLLI), 82-102 (LWCF…ELGV), 116-136 (PYLT…FTST), 153-173 (FVYL…KIIS), and 178-198 (IYAG…LSLF).

It belongs to the MsrQ family. In terms of assembly, heterodimer of a catalytic subunit (MsrP) and a heme-binding subunit (MsrQ). Requires FMN as cofactor. Heme b is required as a cofactor.

The protein localises to the cell inner membrane. In terms of biological role, part of the MsrPQ system that repairs oxidized periplasmic proteins containing methionine sulfoxide residues (Met-O), using respiratory chain electrons. Thus protects these proteins from oxidative-stress damage caused by reactive species of oxygen and chlorine generated by the host defense mechanisms. MsrPQ is essential for the maintenance of envelope integrity under bleach stress, rescuing a wide series of structurally unrelated periplasmic proteins from methionine oxidation, including the primary periplasmic chaperone SurA and the lipoprotein Pal. MsrQ provides electrons for reduction to the reductase catalytic subunit MsrP, using the quinone pool of the respiratory chain. The protein is Protein-methionine-sulfoxide reductase heme-binding subunit MsrQ of Escherichia coli O6:H1 (strain CFT073 / ATCC 700928 / UPEC).